A 242-amino-acid chain; its full sequence is DNA repair protein RecO (242 aa).

This sequence belongs to the RecO family. Monomer.

Functionally, involved in DNA repair and RecF pathway recombination. This chain is DNA repair protein RecO, found in Shigella flexneri.